The chain runs to 663 residues: DNA ligase (663 aa).

NAD(+) contacts are provided by residues 34–38 (DYEYD), 83–84 (SL), and glutamate 114. The active-site N6-AMP-lysine intermediate is lysine 116. The NAD(+) site is built by arginine 137, glutamate 171, lysine 286, and lysine 310. Zn(2+) contacts are provided by cysteine 404, cysteine 407, cysteine 422, and cysteine 427. In terms of domain architecture, BRCT spans 585-663 (TVESPLTGKN…ADEFIKLANG (79 aa)).

This sequence belongs to the NAD-dependent DNA ligase family. LigA subfamily. It depends on Mg(2+) as a cofactor. Requires Mn(2+) as cofactor.

The catalysed reaction is NAD(+) + (deoxyribonucleotide)n-3'-hydroxyl + 5'-phospho-(deoxyribonucleotide)m = (deoxyribonucleotide)n+m + AMP + beta-nicotinamide D-nucleotide.. Its function is as follows. DNA ligase that catalyzes the formation of phosphodiester linkages between 5'-phosphoryl and 3'-hydroxyl groups in double-stranded DNA using NAD as a coenzyme and as the energy source for the reaction. It is essential for DNA replication and repair of damaged DNA. This chain is DNA ligase, found in Brachyspira hyodysenteriae (strain ATCC 49526 / WA1).